Reading from the N-terminus, the 373-residue chain is Glycerol-3-phosphate dehydrogenase [NAD(+)] 2 (373 aa).

Serine 15 carries the post-translational modification Phosphoserine. NAD(+) contacts are provided by residues 31–36 (GSGNWG), phenylalanine 123, lysine 146, and alanine 179. Position 146 (lysine 146) interacts with substrate. Lysine 236 (proton acceptor) is an active-site residue. The NAD(+) site is built by arginine 300 and glutamine 329. 300 to 301 (RN) provides a ligand contact to substrate.

It belongs to the NAD-dependent glycerol-3-phosphate dehydrogenase family.

It localises to the cytoplasm. The enzyme catalyses sn-glycerol 3-phosphate + NAD(+) = dihydroxyacetone phosphate + NADH + H(+). This chain is Glycerol-3-phosphate dehydrogenase [NAD(+)] 2 (gpd2), found in Schizosaccharomyces pombe (strain 972 / ATCC 24843) (Fission yeast).